The sequence spans 645 residues: Protein hrpC2 (645 aa).

Transmembrane regions (helical) follow at residues 18–34, 43–59, 108–124, 201–217, 243–259, 285–301, and 308–324; these read VAIAALVVAVIGLMILP, LLGINITLSVVLLMVTM, LVVGGNLVVGLVVFLII, IAGLVITMVNILAGIVV, VSQIASLLISVAAGVMI, ARALMAASVLLACFAFV, and LFLLLAAAVGAGGYTIW. The disordered stretch occupies residues 334-354; sequence DQRKLPSASRKGAKGEAPHIR.

Belongs to the FHIPEP (flagella/HR/invasion proteins export pore) family.

It is found in the cell inner membrane. In terms of biological role, involved in the secretion of a proteinaceous elicitor of the hypersensitivity response in plants. This chain is Protein hrpC2 (hrpC2), found in Xanthomonas euvesicatoria.